We begin with the raw amino-acid sequence, 70 residues long: DNA-directed RNA polymerase subunit epsilon (70 aa).

The protein belongs to the RNA polymerase subunit epsilon family. As to quaternary structure, RNAP is composed of a core of 2 alpha, a beta and a beta' subunit. The core is associated with a delta subunit, and at least one of epsilon or omega. When a sigma factor is associated with the core the holoenzyme is formed, which can initiate transcription.

It catalyses the reaction RNA(n) + a ribonucleoside 5'-triphosphate = RNA(n+1) + diphosphate. In terms of biological role, a non-essential component of RNA polymerase (RNAP). The polypeptide is DNA-directed RNA polymerase subunit epsilon (Bacillus cereus (strain Q1)).